The chain runs to 1416 residues: DNA-directed RNA polymerase subunit beta (1416 aa).

Residues 1388–1416 (AKAAREQAEGELGGPLGTPRGAAAEKNTA) form a disordered region.

This sequence belongs to the RNA polymerase beta chain family. In terms of assembly, the RNAP catalytic core consists of 2 alpha, 1 beta, 1 beta' and 1 omega subunit. When a sigma factor is associated with the core the holoenzyme is formed, which can initiate transcription.

The enzyme catalyses RNA(n) + a ribonucleoside 5'-triphosphate = RNA(n+1) + diphosphate. Its function is as follows. DNA-dependent RNA polymerase catalyzes the transcription of DNA into RNA using the four ribonucleoside triphosphates as substrates. The chain is DNA-directed RNA polymerase subunit beta from Anaeromyxobacter sp. (strain Fw109-5).